The chain runs to 439 residues: Xylose isomerase (439 aa).

Residues H99 and D102 contribute to the active site. E230, E266, H269, D294, D305, D307, and D337 together coordinate Mg(2+).

It belongs to the xylose isomerase family. As to quaternary structure, homotetramer. The cofactor is Mg(2+).

It is found in the cytoplasm. The enzyme catalyses alpha-D-xylose = alpha-D-xylulofuranose. The protein is Xylose isomerase of Shouchella clausii (strain KSM-K16) (Alkalihalobacillus clausii).